Reading from the N-terminus, the 482-residue chain is C3a anaphylatoxin chemotactic receptor (482 aa).

Topologically, residues 1 to 23 (MASFSAETNSTDLLSQPWNEPPV) are extracellular. A glycan (N-linked (GlcNAc...) asparagine) is linked at Asn-9. Residues 24-46 (ILSMVILSLTFLLGLPGNGLVLW) traverse the membrane as a helical segment. At 47–57 (VAGLKMQRTVN) the chain is on the cytoplasmic side. A helical membrane pass occupies residues 58–80 (TIWFLHLTLADLLCCLSLPFSLA). The Extracellular segment spans residues 81–96 (HLALQGQWPYGRFLCK). A disulfide bridge links Cys-95 with Cys-172. A helical membrane pass occupies residues 97-118 (LIPSIIVLNMFASVFLLTAISL). At 119–139 (DRCLVVFKPIWCQNHRNVGMA) the chain is on the cytoplasmic side. The chain crosses the membrane as a helical span at residues 140–160 (CSICGCIWVVAFVMCIPVFVY). Topologically, residues 161-340 (REIFTTDNHN…TPLVAITITR (180 aa)) are extracellular. 2 positions are modified to sulfotyrosine: Tyr-174 and Tyr-184. N-linked (GlcNAc...) asparagine glycosylation is present at Asn-194. Ser-266 is a glycosylation site (O-linked (GalNAc...) serine). Tyr-318 is modified (sulfotyrosine). Residues 341–360 (LVVGFLLPSVIMIACYSFIV) form a helical membrane-spanning segment. Topologically, residues 361–377 (FRMQRGRFAKSQSKTFR) are cytoplasmic. A helical membrane pass occupies residues 378–400 (VAVVVVAVFLVCWTPYHIFGVLS). Residues 401–417 (LLTDPETPLGKTLMSWD) are Extracellular-facing. The chain crosses the membrane as a helical span at residues 418–438 (HVCIALASANSCFNPFLYALL). Residues 439–482 (GKDFRKKARQSIQGILEAAFSEELTRSTHCPSNNVISERNSTTV) lie on the Cytoplasmic side of the membrane. Ser-459 is modified (phosphoserine). Phosphothreonine is present on Thr-463.

This sequence belongs to the G-protein coupled receptor 1 family. As to quaternary structure, interacts with VGF-derived peptide TLQP-21. In terms of processing, among the sulfation sites Tyr-174 is essential for binding of C3a anaphylatoxin. O-glycosylated. In terms of tissue distribution, widely expressed in several differentiated hematopoietic cell lines, in the lung, spleen, ovary, placenta, small intestine, throughout the brain, heart, and endothelial cells. Mostly expressed in lymphoid tissues.

The protein localises to the cell membrane. Receptor for the chemotactic and inflammatory peptide anaphylatoxin C3a. This receptor stimulates chemotaxis, granule enzyme release and superoxide anion production. The polypeptide is C3a anaphylatoxin chemotactic receptor (C3AR1) (Homo sapiens (Human)).